We begin with the raw amino-acid sequence, 130 residues long: Small ribosomal subunit protein uS8 (130 aa).

This sequence belongs to the universal ribosomal protein uS8 family. In terms of assembly, part of the 30S ribosomal subunit. Contacts proteins S5 and S12.

In terms of biological role, one of the primary rRNA binding proteins, it binds directly to 16S rRNA central domain where it helps coordinate assembly of the platform of the 30S subunit. This Shigella boydii serotype 18 (strain CDC 3083-94 / BS512) protein is Small ribosomal subunit protein uS8.